Consider the following 115-residue polypeptide: NAD(P)H-quinone oxidoreductase subunit M (115 aa).

The protein belongs to the complex I NdhM subunit family. NDH-1 can be composed of about 15 different subunits; different subcomplexes with different compositions have been identified which probably have different functions.

It localises to the cellular thylakoid membrane. The enzyme catalyses a plastoquinone + NADH + (n+1) H(+)(in) = a plastoquinol + NAD(+) + n H(+)(out). The catalysed reaction is a plastoquinone + NADPH + (n+1) H(+)(in) = a plastoquinol + NADP(+) + n H(+)(out). Functionally, NDH-1 shuttles electrons from an unknown electron donor, via FMN and iron-sulfur (Fe-S) centers, to quinones in the respiratory and/or the photosynthetic chain. The immediate electron acceptor for the enzyme in this species is believed to be plastoquinone. Couples the redox reaction to proton translocation, and thus conserves the redox energy in a proton gradient. Cyanobacterial NDH-1 also plays a role in inorganic carbon-concentration. In Prochlorococcus marinus subsp. pastoris (strain CCMP1986 / NIES-2087 / MED4), this protein is NAD(P)H-quinone oxidoreductase subunit M.